Reading from the N-terminus, the 324-residue chain is Biotin synthase (324 aa).

The 228-residue stretch at 42–269 (NEVQISSLLN…KSYIRLAAGR (228 aa)) folds into the Radical SAM core domain. 3 residues coordinate [4Fe-4S] cluster: cysteine 57, cysteine 61, and cysteine 64. 4 residues coordinate [2Fe-2S] cluster: cysteine 101, cysteine 132, cysteine 192, and arginine 264.

Belongs to the radical SAM superfamily. Biotin synthase family. In terms of assembly, homodimer. The cofactor is [4Fe-4S] cluster. Requires [2Fe-2S] cluster as cofactor.

The catalysed reaction is (4R,5S)-dethiobiotin + (sulfur carrier)-SH + 2 reduced [2Fe-2S]-[ferredoxin] + 2 S-adenosyl-L-methionine = (sulfur carrier)-H + biotin + 2 5'-deoxyadenosine + 2 L-methionine + 2 oxidized [2Fe-2S]-[ferredoxin]. It functions in the pathway cofactor biosynthesis; biotin biosynthesis; biotin from 7,8-diaminononanoate: step 2/2. Its function is as follows. Catalyzes the conversion of dethiobiotin (DTB) to biotin by the insertion of a sulfur atom into dethiobiotin via a radical-based mechanism. The protein is Biotin synthase of Ehrlichia canis (strain Jake).